The following is a 117-amino-acid chain: MTDIPPAVSPPPGPEIIDALAAVIASRQGADPATSYTAKLFGRGRGKIVQKFGEEAFEVGVAALVESPEQVVAESADVLYHLMVLWADVGVTPDRVWAELARRFGTSGIDEKAARKK.

Belongs to the PRA-PH family.

The protein localises to the cytoplasm. The enzyme catalyses 1-(5-phospho-beta-D-ribosyl)-ATP + H2O = 1-(5-phospho-beta-D-ribosyl)-5'-AMP + diphosphate + H(+). It functions in the pathway amino-acid biosynthesis; L-histidine biosynthesis; L-histidine from 5-phospho-alpha-D-ribose 1-diphosphate: step 2/9. The protein is Phosphoribosyl-ATP pyrophosphatase of Rhodospirillum rubrum (strain ATCC 11170 / ATH 1.1.1 / DSM 467 / LMG 4362 / NCIMB 8255 / S1).